The primary structure comprises 591 residues: V-type ATP synthase alpha chain (591 aa).

242–249 (GPFGAGKT) provides a ligand contact to ATP.

The protein belongs to the ATPase alpha/beta chains family.

The catalysed reaction is ATP + H2O + 4 H(+)(in) = ADP + phosphate + 5 H(+)(out). Functionally, produces ATP from ADP in the presence of a proton gradient across the membrane. The V-type alpha chain is a catalytic subunit. The polypeptide is V-type ATP synthase alpha chain (atpA) (Chlamydia pneumoniae (Chlamydophila pneumoniae)).